Here is a 1507-residue protein sequence, read N- to C-terminus: DNA-directed RNA polymerase subunit beta' (1507 aa).

C71, C73, C86, and C89 together coordinate Zn(2+). Residues D470, D472, and D474 each contribute to the Mg(2+) site. Positions 800, 874, 881, and 884 each coordinate Zn(2+).

The protein belongs to the RNA polymerase beta' chain family. In terms of assembly, the RNAP catalytic core consists of 2 alpha, 1 beta, 1 beta' and 1 omega subunit. When a sigma factor is associated with the core the holoenzyme is formed, which can initiate transcription. The cofactor is Mg(2+). It depends on Zn(2+) as a cofactor.

The enzyme catalyses RNA(n) + a ribonucleoside 5'-triphosphate = RNA(n+1) + diphosphate. Functionally, DNA-dependent RNA polymerase catalyzes the transcription of DNA into RNA using the four ribonucleoside triphosphates as substrates. The sequence is that of DNA-directed RNA polymerase subunit beta' from Nitratiruptor sp. (strain SB155-2).